The primary structure comprises 292 residues: Glutamate racemase (292 aa).

Substrate is bound by residues 28-29 (DS) and 60-61 (YG). Residue Cys-91 is the Proton donor/acceptor of the active site. 92–93 (NT) provides a ligand contact to substrate. Cys-200 (proton donor/acceptor) is an active-site residue. 201 to 202 (TH) serves as a coordination point for substrate.

This sequence belongs to the aspartate/glutamate racemases family.

It carries out the reaction L-glutamate = D-glutamate. Its pathway is cell wall biogenesis; peptidoglycan biosynthesis. Functionally, provides the (R)-glutamate required for cell wall biosynthesis. The sequence is that of Glutamate racemase from Nostoc sp. (strain PCC 7120 / SAG 25.82 / UTEX 2576).